Consider the following 392-residue polypeptide: Integrin-linked kinase-associated serine/threonine phosphatase 2C (392 aa).

M1 bears the N-acetylmethionine mark. Residues 1–90 form a disordered region; sequence MDLFGDLPEP…TSEEEKNGSE (90 aa). S13 carries the post-translational modification Phosphoserine. Residues 56 to 70 are compositionally biased toward polar residues; sequence SGDSGSLATSISQMV. The segment covering 72-90 has biased composition (basic and acidic residues); sequence TEGKGAKRKTSEEEKNGSE. One can recognise a PPM-type phosphatase domain in the interval 108 to 390; the sequence is KGYVAERKGE…DNVTVMVVRI (283 aa). 2 residues coordinate Mn(2+): D152 and G153. N6-acetyllysine is present on K210. Mn(2+)-binding residues include D326 and D381.

It belongs to the PP2C family. In terms of assembly, interacts with ILK. Specific association with ILK is independent of the catalytic activity of either partner. Requires Mg(2+) as cofactor. It depends on Mn(2+) as a cofactor. Widely expressed. Highest levels expressed in striated muscle. Much lower levels evident in various smooth muscle tissues.

The protein resides in the cytoplasm. The catalysed reaction is O-phospho-L-seryl-[protein] + H2O = L-seryl-[protein] + phosphate. It carries out the reaction O-phospho-L-threonyl-[protein] + H2O = L-threonyl-[protein] + phosphate. Its activity is regulated as follows. Inhibited rather than stimulated by magnesium. Its function is as follows. Protein phosphatase that may play a role in regulation of cell cycle progression via dephosphorylation of its substrates whose appropriate phosphorylation states might be crucial for cell proliferation. Selectively associates with integrin linked kinase (ILK), to modulate cell adhesion and growth factor signaling. Inhibits the ILK-GSK3B signaling axis and may play an important role in inhibiting oncogenic transformation. The protein is Integrin-linked kinase-associated serine/threonine phosphatase 2C (ILKAP) of Homo sapiens (Human).